The sequence spans 899 residues: Conserved oligomeric Golgi complex subunit 3 (899 aa).

This sequence belongs to the COG3 family. As to quaternary structure, component of the conserved oligomeric Golgi complex which is composed of eight different subunits and is required for normal Golgi morphology and localization.

The protein resides in the golgi apparatus membrane. Its function is as follows. Involved in ER-Golgi transport. In Aedes aegypti (Yellowfever mosquito), this protein is Conserved oligomeric Golgi complex subunit 3.